The primary structure comprises 509 residues: Cysteine--tRNA ligase (509 aa).

A Zn(2+)-binding site is contributed by Cys19. The 'HIGH' region signature appears at 21 to 31 (PTVYNDAHIGH). Zn(2+) contacts are provided by Cys213, His238, and Glu242. Positions 284–288 (KMSKS) match the 'KMSKS' region motif. Lys287 is an ATP binding site.

It belongs to the class-I aminoacyl-tRNA synthetase family. Zn(2+) serves as cofactor.

The catalysed reaction is tRNA(Cys) + L-cysteine + ATP = L-cysteinyl-tRNA(Cys) + AMP + diphosphate. This Acanthamoeba polyphaga (Amoeba) protein is Cysteine--tRNA ligase (CARS).